We begin with the raw amino-acid sequence, 448 residues long: Tubulin beta chain (448 aa).

GTP contacts are provided by Gln-11, Glu-69, Ser-138, Gly-142, Thr-143, Gly-144, Asn-204, and Asn-226. Mg(2+) is bound at residue Glu-69. The segment at 425–448 (YQDASISEGEEEYLEEEEPLEHEE) is disordered. A compositionally biased stretch (acidic residues) spans 432-448 (EGEEEYLEEEEPLEHEE).

This sequence belongs to the tubulin family. As to quaternary structure, dimer of alpha and beta chains. A typical microtubule is a hollow water-filled tube with an outer diameter of 25 nm and an inner diameter of 15 nM. Alpha-beta heterodimers associate head-to-tail to form protofilaments running lengthwise along the microtubule wall with the beta-tubulin subunit facing the microtubule plus end conferring a structural polarity. Microtubules usually have 13 protofilaments but different protofilament numbers can be found in some organisms and specialized cells. Requires Mg(2+) as cofactor.

It localises to the cytoplasm. The protein localises to the cytoskeleton. Tubulin is the major constituent of microtubules, a cylinder consisting of laterally associated linear protofilaments composed of alpha- and beta-tubulin heterodimers. Microtubules grow by the addition of GTP-tubulin dimers to the microtubule end, where a stabilizing cap forms. Below the cap, tubulin dimers are in GDP-bound state, owing to GTPase activity of alpha-tubulin. This chain is Tubulin beta chain (benA56), found in Aspergillus oryzae (strain ATCC 42149 / RIB 40) (Yellow koji mold).